A 178-amino-acid chain; its full sequence is Nucleoside triphosphate/diphosphate phosphatase (178 aa).

The active-site Proton donor is Arg-23. 6 residues coordinate Mg(2+): Asn-87, Asp-103, Asp-105, Asp-107, Asp-120, and Glu-123.

This sequence belongs to the Ntdp family. Mg(2+) is required as a cofactor.

The enzyme catalyses a ribonucleoside 5'-triphosphate + H2O = a ribonucleoside 5'-diphosphate + phosphate + H(+). It catalyses the reaction a ribonucleoside 5'-diphosphate + H2O = a ribonucleoside 5'-phosphate + phosphate + H(+). Its function is as follows. Has nucleoside phosphatase activity towards nucleoside triphosphates and nucleoside diphosphates. The chain is Nucleoside triphosphate/diphosphate phosphatase from Latilactobacillus sakei subsp. sakei (strain 23K) (Lactobacillus sakei subsp. sakei).